Consider the following 515-residue polypeptide: Glucose-6-phosphate 1-dehydrogenase (515 aa).

Positions 53 and 160 each coordinate NADP(+). Substrate contacts are provided by H190, K194, E228, and D247. The active-site Proton acceptor is the H252. A substrate-binding site is contributed by K352.

The protein belongs to the glucose-6-phosphate dehydrogenase family.

The enzyme catalyses D-glucose 6-phosphate + NADP(+) = 6-phospho-D-glucono-1,5-lactone + NADPH + H(+). Its pathway is carbohydrate degradation; pentose phosphate pathway; D-ribulose 5-phosphate from D-glucose 6-phosphate (oxidative stage): step 1/3. Catalyzes the oxidation of glucose 6-phosphate to 6-phosphogluconolactone. In Treponema pallidum (strain Nichols), this protein is Glucose-6-phosphate 1-dehydrogenase.